The sequence spans 230 residues: ATP synthase subunit a 1 (230 aa).

5 consecutive transmembrane segments (helical) span residues 20 to 40 (ATIV…WLIT), 78 to 98 (FLPF…LTIF), 112 to 132 (AALA…NVGI), 174 to 194 (LLVA…MTLF), and 195 to 215 (GLLV…VYIA).

The protein belongs to the ATPase A chain family. F-type ATPases have 2 components, CF(1) - the catalytic core - and CF(0) - the membrane proton channel. CF(1) has five subunits: alpha(3), beta(3), gamma(1), delta(1), epsilon(1). CF(0) has four main subunits: a, b, b' and c.

It is found in the cellular thylakoid membrane. Functionally, key component of the proton channel; it plays a direct role in the translocation of protons across the membrane. The sequence is that of ATP synthase subunit a 1 from Crocosphaera subtropica (strain ATCC 51142 / BH68) (Cyanothece sp. (strain ATCC 51142)).